We begin with the raw amino-acid sequence, 215 residues long: Jasmonate monooxygenase ABM (215 aa).

The ABM domain maps to 2 to 90 (FAVIFETRPQ…GVLEDYHLRV (89 aa)).

It localises to the endoplasmic reticulum. The protein resides in the secreted. It carries out the reaction jasmonate + NADPH + O2 + H(+) = (1R,2R)-12-hydroxyjasmonate + NADP(+) + H2O. Monooxygenase that converts the endogenous (and likely the host) jasmonate (JA) to its hydroxylated derivative 12-hydroxyjasmonate (12OH-JA), also known as tuberonic acid, a compound that attenuates or disables jasmonate-based host innate immunity and which is essential for proper initiation and elaboration of the blast disease in rice. ABM, together with a polyketide synthase MGG_04775 and the esterase MGG_04774, share the secondary metabolism gene cluster with ABC transporter ABC3, and therefore may also be involved in the synthesis of other important metabolites such as the ABC3 transporter efflux substrate (ATS) and/or additional polyketides. This Pyricularia oryzae (strain 70-15 / ATCC MYA-4617 / FGSC 8958) (Rice blast fungus) protein is Jasmonate monooxygenase ABM.